Reading from the N-terminus, the 71-residue chain is Large ribosomal subunit protein bL31 (71 aa).

4 residues coordinate Zn(2+): Cys16, Cys18, Cys37, and Cys40.

The protein belongs to the bacterial ribosomal protein bL31 family. Type A subfamily. In terms of assembly, part of the 50S ribosomal subunit. It depends on Zn(2+) as a cofactor.

Binds the 23S rRNA. In Wigglesworthia glossinidia brevipalpis, this protein is Large ribosomal subunit protein bL31.